A 440-amino-acid chain; its full sequence is Chromosomal replication initiator protein DnaA (440 aa).

Residues 1–74 (MNPSQILENL…VQSGNKAIIN (74 aa)) are domain I, interacts with DnaA modulators. The domain II stretch occupies residues 74-99 (NIQAQSAKQSNKSTKIDIAHIKAQST). A domain III, AAA+ region region spans residues 100-316 (ILNPSFTFES…GIIISLNAYA (217 aa)). 4 residues coordinate ATP: Gly146, Gly148, Lys149, and Thr150. The interval 317 to 440 (TILGQEITLE…KNKILVKSQS (124 aa)) is domain IV, binds dsDNA.

It belongs to the DnaA family. In terms of assembly, oligomerizes as a right-handed, spiral filament on DNA at oriC.

It is found in the cytoplasm. Plays an essential role in the initiation and regulation of chromosomal replication. ATP-DnaA binds to the origin of replication (oriC) to initiate formation of the DNA replication initiation complex once per cell cycle. Binds the DnaA box (a 9 base pair repeat at the origin) and separates the double-stranded (ds)DNA. Forms a right-handed helical filament on oriC DNA; dsDNA binds to the exterior of the filament while single-stranded (ss)DNA is stabiized in the filament's interior. The ATP-DnaA-oriC complex binds and stabilizes one strand of the AT-rich DNA unwinding element (DUE), permitting loading of DNA polymerase. After initiation quickly degrades to an ADP-DnaA complex that is not apt for DNA replication. Binds acidic phospholipids. The polypeptide is Chromosomal replication initiator protein DnaA (Campylobacter jejuni subsp. jejuni serotype O:2 (strain ATCC 700819 / NCTC 11168)).